The primary structure comprises 331 residues: Pantothenate kinase (331 aa).

109–116 (GSVAVGKS) is an ATP binding site.

It belongs to the prokaryotic pantothenate kinase family.

The protein resides in the cytoplasm. The catalysed reaction is (R)-pantothenate + ATP = (R)-4'-phosphopantothenate + ADP + H(+). It functions in the pathway cofactor biosynthesis; coenzyme A biosynthesis; CoA from (R)-pantothenate: step 1/5. In Rhizobium johnstonii (strain DSM 114642 / LMG 32736 / 3841) (Rhizobium leguminosarum bv. viciae), this protein is Pantothenate kinase.